We begin with the raw amino-acid sequence, 1450 residues long: DNA-directed RNA polymerase RPB1 homolog (1450 aa).

Belongs to the RNA polymerase beta' chain family. Part of the viral DNA-directed RNA polymerase that consists of 8 polII-like subunits (RPB1, RPB2, RPB3, RPB5, RPB6, RPB7, RPB9, RPB10), a capping enzyme and a termination factor.

It is found in the virion. The enzyme catalyses RNA(n) + a ribonucleoside 5'-triphosphate = RNA(n+1) + diphosphate. In terms of biological role, catalytic component of the DNA-directed RNA polymerase (RNAP) that catalyzes the transcription in the cytoplasm of viral DNA into RNA using the four ribonucleoside triphosphates as substrates. Forms the polymerase active center together with RPB2. Part of the core element with the central large cleft, the clamp element that moves to open and close the cleft and the jaws that are thought to grab the incoming DNA template. The chain is DNA-directed RNA polymerase RPB1 homolog from Ornithodoros (relapsing fever ticks).